Consider the following 547-residue polypeptide: Rho GTPase-activating protein 36 (547 aa).

An N-terminal signal peptide occupies residues 1 to 40; sequence MGGCNPFLKAARTLCPRIMPPLLFLSAFIFLVNVLGGAPG. Residues 226 to 426 enclose the Rho-GAP domain; the sequence is MSLNPIAKQI…AMIDNWDILF (201 aa). The interval 493–547 is disordered; the sequence is FDEGSSEEPAVPPGTAHSHDDEEGAGNPPIPEQDRPLLRVPREKQAKTGIGYFFP. Residues 524–538 show a composition bias toward basic and acidic residues; sequence EQDRPLLRVPREKQA.

Its function is as follows. GTPase activator for the Rho-type GTPases by converting them to an inactive GDP-bound state. The chain is Rho GTPase-activating protein 36 (ARHGAP36) from Ailuropoda melanoleuca (Giant panda).